Here is a 309-residue protein sequence, read N- to C-terminus: Foldase protein PrsA (309 aa).

Positions 1-22 (MKTRSKLAAGFLTLMSVATLAA) are cleaved as a signal peptide. A lipid anchor (N-palmitoyl cysteine) is attached at Cys23. The S-diacylglycerol cysteine moiety is linked to residue Cys23. Positions 146 to 241 (TPETSVQVIK…TSYYIIKVTD (96 aa)) constitute a PpiC domain.

It belongs to the PrsA family.

Its subcellular location is the cell membrane. It carries out the reaction [protein]-peptidylproline (omega=180) = [protein]-peptidylproline (omega=0). In terms of biological role, plays a major role in protein secretion by helping the post-translocational extracellular folding of several secreted proteins. The protein is Foldase protein PrsA of Streptococcus agalactiae serotype V (strain ATCC BAA-611 / 2603 V/R).